Consider the following 504-residue polypeptide: MNGSNETVERRIELRRPLVDTEKKLPLEVGLESVLTESSLPYRRRVYLGMCIELKLLLRLALPAILVYLINGGMGISARIFAGHLGSTQLAAASIGNSSFSLVYALMLGMGSAVETLCGQAYGAHRYEMLGIYLQRATIVLALVGFPMTILYTFSYPILLLLGEPKTVSYMGSLYIAGLIPQIFAYAVYFTAQKFLQAQSVVAPSAYISAAALVLQISLTWITVYAMGQGLMGIAYVLTISWWFIVGAQTFYVITSVRFKDTWTGFSWKSLHGLWSFFKLSAGSAVMICLELWYTQILVLLAGLLKDPALSLDSLSICMSISALSFMVSVGFNAAVSVRTSNELGAGNPKSALFSTWTATFVSFVISVVEALVVIASRDNVSYIFTSDADVAKAVSDLCPFLAVTIILNGIQPVLSGVAVGCGWQTYVAYVNIGCYYIVGIPIGCILGFTFNFQAKGIWTGMIGGTLMQTLILLYVTYQADWDKEVEKARKRLDMWDDKEPLQN.

The next 12 helical transmembrane spans lie at 56–76 (LLLR…GMGI), 90–110 (LAAA…MLGM), 139–159 (IVLA…YPIL), 170–190 (YMGS…AVYF), 208–228 (ISAA…YAMG), 234–254 (IAYV…FYVI), 273–295 (GLWS…LWYT), 316–336 (SICM…NAAV), 356–376 (TWTA…VVIA), 401–421 (FLAV…VAVG), 433–453 (IGCY…TFNF), and 457–477 (GIWT…LYVT).

The protein belongs to the multi antimicrobial extrusion (MATE) (TC 2.A.66.1) family.

The protein resides in the membrane. In Arabidopsis thaliana (Mouse-ear cress), this protein is Protein DETOXIFICATION 38.